Consider the following 603-residue polypeptide: Elongation factor 4 (603 aa).

The tr-type G domain maps to 7–189 (SRIRNFSIIA…AIVQQVPPPA (183 aa)). GTP is bound by residues 19–24 (DHGKST) and 136–139 (NKID).

The protein belongs to the TRAFAC class translation factor GTPase superfamily. Classic translation factor GTPase family. LepA subfamily.

The protein localises to the cell inner membrane. The enzyme catalyses GTP + H2O = GDP + phosphate + H(+). Required for accurate and efficient protein synthesis under certain stress conditions. May act as a fidelity factor of the translation reaction, by catalyzing a one-codon backward translocation of tRNAs on improperly translocated ribosomes. Back-translocation proceeds from a post-translocation (POST) complex to a pre-translocation (PRE) complex, thus giving elongation factor G a second chance to translocate the tRNAs correctly. Binds to ribosomes in a GTP-dependent manner. This Synechocystis sp. (strain ATCC 27184 / PCC 6803 / Kazusa) protein is Elongation factor 4.